The chain runs to 103 residues: MLTLSLSHFLILGAILFAISVVGIFLNRKNLLVLLMAIELMLLAVNMNFVAFSHYLQDLSGQIFVFFILTVAAAESAIGLAILIVLFRNLKSIHVDDLGSLKG.

Transmembrane regions (helical) follow at residues 6 to 26, 32 to 52, and 63 to 83; these read LSHFLILGAILFAISVVGIFL, LVLLMAIELMLLAVNMNFVAF, and IFVFFILTVAAAESAIGLAIL.

This sequence belongs to the complex I subunit 4L family. In terms of assembly, NDH-1 is composed of 14 different subunits. Subunits NuoA, H, J, K, L, M, N constitute the membrane sector of the complex.

It localises to the cell inner membrane. It carries out the reaction a quinone + NADH + 5 H(+)(in) = a quinol + NAD(+) + 4 H(+)(out). NDH-1 shuttles electrons from NADH, via FMN and iron-sulfur (Fe-S) centers, to quinones in the respiratory chain. The immediate electron acceptor for the enzyme in this species is believed to be ubiquinone. Couples the redox reaction to proton translocation (for every two electrons transferred, four hydrogen ions are translocated across the cytoplasmic membrane), and thus conserves the redox energy in a proton gradient. The protein is NADH-quinone oxidoreductase subunit K of Dechloromonas aromatica (strain RCB).